Here is a 450-residue protein sequence, read N- to C-terminus: Cell division cycle 20.5, cofactor of APC complex (450 aa).

WD repeat units lie at residues 129-166 (ADDF…TYKL), 171-210 (EEEG…QVRT), 214-251 (GHES…SIVE), 255-294 (GHTE…SSNP), 304-346 (EHTA…CLNS), 348-389 (ETGS…KMAE), and 392-431 (GHTS…PKTT).

The protein belongs to the WD repeat CDC20/Fizzy family. In terms of assembly, the APC/C is composed of at least 11 subunits that stay tightly associated throughout the cell cycle. Binds to GIG1 and PYM. Part of the mitotic checkpoint complex (MCC); interacts with MAD2 and BUB1.

The protein resides in the nucleus. It participates in protein modification; protein ubiquitination. Functionally, component of the anaphase promoting complex/cyclosome (APC/C), a cell cycle-regulated E3 ubiquitin-protein ligase complex that controls progression through mitosis and the G1 phase of the cell cycle. The protein is Cell division cycle 20.5, cofactor of APC complex (CDC20-5) of Arabidopsis thaliana (Mouse-ear cress).